Consider the following 984-residue polypeptide: Respiratory nitrate reductase subunit alpha (984 aa).

A disordered region spans residues 1–43 (MSRNDASQLDDGETTAESPPDDQANDAPEVGDPPGDPVDADSG). Residues 8–24 (QLDDGETTAESPPDDQA) are compositionally biased toward acidic residues. The 4Fe-4S Mo/W bis-MGD-type domain occupies 103-167 (DSVSRSTHSV…CYTDYVNADQ (65 aa)). Residues histidine 110, cysteine 114, cysteine 118, and cysteine 153 each contribute to the [4Fe-4S] cluster site. A Mo-bis(molybdopterin guanine dinucleotide)-binding site is contributed by aspartate 249.

Belongs to the prokaryotic molybdopterin-containing oxidoreductase family. As to quaternary structure, probable multiprotein complex; a catalytic heterodimer of an alpha and beta chain is proposed to associate with additional subunits involved in membrane attachment and electron transfer. It depends on [4Fe-4S] cluster as a cofactor. The cofactor is Mo-bis(molybdopterin guanine dinucleotide). In terms of processing, exported by the Tat system.

The protein resides in the cell membrane. It catalyses the reaction nitrate + a quinol = a quinone + nitrite + H2O. Inhibited by cyanide, azide and antimycin A. Enzyme stability is not dependent on salt concentration. The respiratory membrane-bound nitrate reductase enzyme complex plays a role in generation of metabolic energy by using nitrate as a terminal electron acceptor during anaerobic conditions. The alpha chain is the actual site of nitrate reduction. In Haloferax mediterranei (strain ATCC 33500 / DSM 1411 / JCM 8866 / NBRC 14739 / NCIMB 2177 / R-4) (Halobacterium mediterranei), this protein is Respiratory nitrate reductase subunit alpha (narG).